A 168-amino-acid chain; its full sequence is Crossover junction endodeoxyribonuclease RuvC (168 aa).

Residues aspartate 7, glutamate 66, and aspartate 138 contribute to the active site. 3 residues coordinate Mg(2+): aspartate 7, glutamate 66, and aspartate 138.

This sequence belongs to the RuvC family. Homodimer which binds Holliday junction (HJ) DNA. The HJ becomes 2-fold symmetrical on binding to RuvC with unstacked arms; it has a different conformation from HJ DNA in complex with RuvA. In the full resolvosome a probable DNA-RuvA(4)-RuvB(12)-RuvC(2) complex forms which resolves the HJ. It depends on Mg(2+) as a cofactor.

The protein resides in the cytoplasm. It catalyses the reaction Endonucleolytic cleavage at a junction such as a reciprocal single-stranded crossover between two homologous DNA duplexes (Holliday junction).. Functionally, the RuvA-RuvB-RuvC complex processes Holliday junction (HJ) DNA during genetic recombination and DNA repair. Endonuclease that resolves HJ intermediates. Cleaves cruciform DNA by making single-stranded nicks across the HJ at symmetrical positions within the homologous arms, yielding a 5'-phosphate and a 3'-hydroxyl group; requires a central core of homology in the junction. The consensus cleavage sequence is 5'-(A/T)TT(C/G)-3'. Cleavage occurs on the 3'-side of the TT dinucleotide at the point of strand exchange. HJ branch migration catalyzed by RuvA-RuvB allows RuvC to scan DNA until it finds its consensus sequence, where it cleaves and resolves the cruciform DNA. The protein is Crossover junction endodeoxyribonuclease RuvC of Cereibacter sphaeroides (strain ATCC 17029 / ATH 2.4.9) (Rhodobacter sphaeroides).